The primary structure comprises 1382 residues: DNA-directed RNA polymerase subunit beta'' (1382 aa).

The Zn(2+) site is built by cysteine 224, cysteine 294, cysteine 301, and cysteine 304.

The protein belongs to the RNA polymerase beta' chain family. RpoC2 subfamily. In terms of assembly, in plastids the minimal PEP RNA polymerase catalytic core is composed of four subunits: alpha, beta, beta', and beta''. When a (nuclear-encoded) sigma factor is associated with the core the holoenzyme is formed, which can initiate transcription. Zn(2+) serves as cofactor.

It is found in the plastid. The protein resides in the chloroplast. It carries out the reaction RNA(n) + a ribonucleoside 5'-triphosphate = RNA(n+1) + diphosphate. DNA-dependent RNA polymerase catalyzes the transcription of DNA into RNA using the four ribonucleoside triphosphates as substrates. The sequence is that of DNA-directed RNA polymerase subunit beta'' from Liriodendron tulipifera (Tuliptree).